The sequence spans 190 residues: Cytoglobin (190 aa).

Residues 1 to 21 (MEKVPGDMEIERRERSEELSE) are disordered. The 150-residue stretch at 18 to 167 (ELSEAERKAV…IYSHVTAAYK (150 aa)) folds into the Globin domain. A disulfide bridge connects residues cysteine 38 and cysteine 83. The heme b site is built by histidine 81 and histidine 113.

Belongs to the globin family. In terms of assembly, monomeric. Homodimer; disulfide-linked in vitro. Also homooligomeric in vitro. In terms of processing, the formation of an intramolecular disulfide bond between cysteines Cys-38 and Cys-83 specifically enhances the nitrite reductase activity. Expressed in brain and retina by non-neuronal cells (at protein level). This is the major globin expressed in vascular smooth muscle and is not present in the endothelium (at protein level).

It is found in the cytoplasm. The protein resides in the nucleus. The catalysed reaction is Fe(II)-heme b-[protein] + nitric oxide + O2 = Fe(III)-heme b-[protein] + nitrate. It carries out the reaction 2 superoxide + 2 H(+) = H2O2 + O2. The enzyme catalyses Fe(III)-heme b-[protein] + nitric oxide + H2O = Fe(II)-heme b-[protein] + nitrite + 2 H(+). It catalyses the reaction H2O2 + AH2 = A + 2 H2O. Its activity is regulated as follows. The nitric oxide dioxygenase activity is activated by a reducing system composed of cytochrome b5, its upstream reductase CYB5R3 and NADH. Its function is as follows. Probable multifunctional globin with a hexacoordinated heme iron required for the catalysis of various reactions depending on redox condition of the cell as well as oxygen availability. Has a nitric oxide dioxygenase (NOD) activity and is most probably involved in cell-mediated and oxygen-dependent nitric oxide consumption. By scavenging this second messenger may regulate several biological processes including endothelium-mediated vasodilation and vascular tone. Under normoxic conditions functions as a nitric oxide dioxygenase (NOD) but under hypoxic conditions the globin may switch its function to that of a nitrite (NO2) reductase (NiR), generating nitric oxide. Could also have peroxidase and superoxide dismutase activities, detoxifying reactive oxygen species and protecting cells against oxidative stress. Also binds dioxygen with low affinity and could function as an oxygen sensor but has probably no function as a respiratory oxygen carrier. The protein is Cytoglobin of Mus musculus (Mouse).